The following is a 323-amino-acid chain: Beta-ketoacyl-[acyl-carrier-protein] synthase III (323 aa).

Catalysis depends on residues C113 and H250. The segment at 251 to 255 (QANLR) is ACP-binding. Residue N280 is part of the active site.

This sequence belongs to the thiolase-like superfamily. FabH family. As to quaternary structure, homodimer.

It localises to the cytoplasm. It catalyses the reaction malonyl-[ACP] + acetyl-CoA + H(+) = 3-oxobutanoyl-[ACP] + CO2 + CoA. It participates in lipid metabolism; fatty acid biosynthesis. Functionally, catalyzes the condensation reaction of fatty acid synthesis by the addition to an acyl acceptor of two carbons from malonyl-ACP. Catalyzes the first condensation reaction which initiates fatty acid synthesis and may therefore play a role in governing the total rate of fatty acid production. Possesses both acetoacetyl-ACP synthase and acetyl transacylase activities. Its substrate specificity determines the biosynthesis of branched-chain and/or straight-chain of fatty acids. The protein is Beta-ketoacyl-[acyl-carrier-protein] synthase III of Paracoccus denitrificans (strain Pd 1222).